The following is a 506-amino-acid chain: Maturase K (506 aa).

It belongs to the intron maturase 2 family. MatK subfamily.

The protein localises to the plastid. The protein resides in the chloroplast. In terms of biological role, usually encoded in the trnK tRNA gene intron. Probably assists in splicing its own and other chloroplast group II introns. The chain is Maturase K from Trifolium resupinatum (Persian clover).